Here is a 144-residue protein sequence, read N- to C-terminus: Large ribosomal subunit protein uL15 (144 aa).

The interval 1–58 is disordered; the sequence is MRLNTLAPAAGSKHAPKRVGRGIGSGLGKTGGRGHKGQKSRSGGKVRPGFEGGQMPLK. Over residues 21 to 31 the composition is skewed to gly residues; that stretch reads RGIGSGLGKTG. The segment covering 32–44 has biased composition (basic residues); sequence GRGHKGQKSRSGG.

This sequence belongs to the universal ribosomal protein uL15 family. Part of the 50S ribosomal subunit.

Its function is as follows. Binds to the 23S rRNA. This Vibrio parahaemolyticus serotype O3:K6 (strain RIMD 2210633) protein is Large ribosomal subunit protein uL15.